A 104-amino-acid chain; its full sequence is Growth-regulated protein homolog alpha (104 aa).

The N-terminal stretch at 1-30 is a signal peptide; the sequence is MAPAATAAAPRLLRAAMLFLLLVAAGRRAA. 2 disulfide bridges follow: Cys40/Cys66 and Cys42/Cys82.

It belongs to the intercrine alpha (chemokine CxC) family.

It localises to the secreted. The protein is Growth-regulated protein homolog alpha of Bos taurus (Bovine).